The chain runs to 331 residues: GTPase Obg (331 aa).

The 159-residue stretch at 1–159 (MHFIDEVKIY…MWIHLRLKLL (159 aa)) folds into the Obg domain. The OBG-type G domain occupies 160–327 (SDVGLIGLPN…IVKLALEIIK (168 aa)). GTP-binding positions include 166 to 173 (GLPNAGKS), 191 to 195 (FTTLV), 212 to 215 (DIPG), 279 to 282 (NKCD), and 308 to 310 (STY). Mg(2+) is bound by residues serine 173 and threonine 193.

This sequence belongs to the TRAFAC class OBG-HflX-like GTPase superfamily. OBG GTPase family. As to quaternary structure, monomer. Mg(2+) is required as a cofactor.

The protein resides in the cytoplasm. In terms of biological role, an essential GTPase which binds GTP, GDP and possibly (p)ppGpp with moderate affinity, with high nucleotide exchange rates and a fairly low GTP hydrolysis rate. Plays a role in control of the cell cycle, stress response, ribosome biogenesis and in those bacteria that undergo differentiation, in morphogenesis control. The protein is GTPase Obg of Rickettsia prowazekii (strain Madrid E).